We begin with the raw amino-acid sequence, 141 residues long: Nucleoside diphosphate kinase (141 aa).

The ATP site is built by K11, F59, R87, T93, R104, and N114. H117 (pros-phosphohistidine intermediate) is an active-site residue.

The protein belongs to the NDK family. Homotetramer. It depends on Mg(2+) as a cofactor.

It localises to the cytoplasm. The catalysed reaction is a 2'-deoxyribonucleoside 5'-diphosphate + ATP = a 2'-deoxyribonucleoside 5'-triphosphate + ADP. It catalyses the reaction a ribonucleoside 5'-diphosphate + ATP = a ribonucleoside 5'-triphosphate + ADP. In terms of biological role, major role in the synthesis of nucleoside triphosphates other than ATP. The ATP gamma phosphate is transferred to the NDP beta phosphate via a ping-pong mechanism, using a phosphorylated active-site intermediate. This is Nucleoside diphosphate kinase from Haemophilus influenzae (strain ATCC 51907 / DSM 11121 / KW20 / Rd).